Consider the following 459-residue polypeptide: Septin-4 (459 aa).

Phosphoserine occurs at positions 10, 49, 98, and 99. 2 disordered regions span residues F18–L52 and S70–S98. One can recognise a Septin-type G domain in the interval K122–S395. Residues G132–S139 are G1 motif. Residues G132 to S139 and T166 each bind GTP. The tract at residues D189–G192 is G3 motif. Residues A270–D273 form a G4 motif region. GTP is bound at residue K271–E279. Phosphoserine is present on S306. Positions 329 and 344 each coordinate GTP. The disordered stretch occupies residues T410 to T430. S413 carries the phosphoserine modification. A Phosphothreonine modification is found at T415. A coiled-coil region spans residues I434–H459.

It belongs to the TRAFAC class TrmE-Era-EngA-EngB-Septin-like GTPase superfamily. Septin GTPase family. Septins polymerize into heterooligomeric protein complexes that form filaments, and can associate with cellular membranes, actin filaments and microtubules. GTPase activity is required for filament formation. Interacts with SEPTIN8. Component of a septin core octameric complex consisting of SEPTIN12, SEPTIN7, SEPTIN6 and SEPTIN2 or SEPTIN4 in the order 12-7-6-2-2-6-7-12 or 12-7-6-4-4-6-7-12. Interacts with SEPTIN14 (via C-terminus). Interacts with DYRK1A. Interacts with SLC6A3/DAT and SNCA/alpha-synuclein. Interacts with STX1A; in the striatum. Interacts with XIAP (via BIR3 domain) following the induction of apoptosis. Interacts with AREL1 (via HECT domain); in the cytoplasm following induction of apoptosis. Post-translationally, phosphorylated by DYRK1A.

Its subcellular location is the cytoplasm. It is found in the cell projection. The protein localises to the cilium. The protein resides in the flagellum. It localises to the cytoplasmic vesicle. Its subcellular location is the secretory vesicle. It is found in the axon. The protein localises to the dendrite. The protein resides in the perikaryon. Filament-forming cytoskeletal GTPase. Pro-apoptotic protein involved in LGR5-positive intestinal stem cell and Paneth cell expansion in the intestines, via its interaction with XIAP. May also play a role in the regulation of cell fate in the intestine. Positive regulator of apoptosis involved in hematopoietic stem cell homeostasis; via its interaction with XIAP. Negative regulator of repair and hair follicle regeneration in response to injury, due to inhibition of hair follicle stem cell proliferation, potentially via its interaction with XIAP. Plays an important role in male fertility and sperm motility. During spermiogenesis, essential for the establishment of the annulus (a fibrous ring structure connecting the midpiece and the principal piece of the sperm flagellum) which is a requisite for the structural and mechanical integrity of the sperm. Involved in the migration of cortical neurons and the formation of neuron leading processes during embryonic development. Required for dopaminergic metabolism in presynaptic autoreceptors; potentially via activity as a presynaptic scaffold protein. The polypeptide is Septin-4 (Rattus norvegicus (Rat)).